The primary structure comprises 209 residues: Guanylate kinase (209 aa).

Residues Gly-10–Val-189 form the Guanylate kinase-like domain. Ala-17–Thr-24 lines the ATP pocket.

It belongs to the guanylate kinase family.

The protein resides in the cytoplasm. It catalyses the reaction GMP + ATP = GDP + ADP. Functionally, essential for recycling GMP and indirectly, cGMP. The chain is Guanylate kinase from Myxococcus xanthus (strain DK1622).